Here is a 269-residue protein sequence, read N- to C-terminus: Phosphate import ATP-binding protein PstB (269 aa).

The 244-residue stretch at 21-264 (SEVRNLSFYY…PKNKQTEDYI (244 aa)) folds into the ABC transporter domain. 53 to 60 (GPSGCGKS) contributes to the ATP binding site.

This sequence belongs to the ABC transporter superfamily. Phosphate importer (TC 3.A.1.7) family. As to quaternary structure, the complex is composed of two ATP-binding proteins (PstB), two transmembrane proteins (PstC and PstA) and a solute-binding protein (PstS).

The protein localises to the cell inner membrane. The enzyme catalyses phosphate(out) + ATP + H2O = ADP + 2 phosphate(in) + H(+). In terms of biological role, part of the ABC transporter complex PstSACB involved in phosphate import. Responsible for energy coupling to the transport system. This is Phosphate import ATP-binding protein PstB from Nitrosospira multiformis (strain ATCC 25196 / NCIMB 11849 / C 71).